Here is a 143-residue protein sequence, read N- to C-terminus: ATP synthase epsilon chain (143 aa).

This sequence belongs to the ATPase epsilon chain family. As to quaternary structure, F-type ATPases have 2 components, CF(1) - the catalytic core - and CF(0) - the membrane proton channel. CF(1) has five subunits: alpha(3), beta(3), gamma(1), delta(1), epsilon(1). CF(0) has three main subunits: a, b and c.

Its subcellular location is the cell inner membrane. Its function is as follows. Produces ATP from ADP in the presence of a proton gradient across the membrane. The protein is ATP synthase epsilon chain of Dichelobacter nodosus (strain VCS1703A).